A 1202-amino-acid polypeptide reads, in one-letter code: Adenine-specific methyltransferase PglX (1202 aa).

This sequence belongs to the methyltransferase superfamily. PglX adenine methyltransferase family.

It carries out the reaction a 2'-deoxyadenosine in DNA + S-adenosyl-L-methionine = an N(6)-methyl-2'-deoxyadenosine in DNA + S-adenosyl-L-homocysteine + H(+). Its function is as follows. BREX systems (bacteriophage exclusion) provide immunity against bacteriophage. Part of a type 1 BREX system which protects against dsDNA phage. This system allows phage adsorption but prevents phage DNA replication, without degradation of the phage DNA. Methylation of bacterial DNA by this protein guides self/non-self discrimination. Functionally, probably methylates the adenine in the fifth position of the hexamer 5'-ACRCAG-3' in genomic DNA. N(6)-methylated adenine on the fifth position of 5'-ACRCAG-3' is found in the genome; there are 1906 sites in the genomic DNA. This is Adenine-specific methyltransferase PglX from Lacticaseibacillus casei (strain Zhang) (Lactobacillus casei).